Here is a 259-residue protein sequence, read N- to C-terminus: Leucyl/phenylalanyl-tRNA--protein transferase (259 aa).

This sequence belongs to the L/F-transferase family.

The protein resides in the cytoplasm. The enzyme catalyses N-terminal L-lysyl-[protein] + L-leucyl-tRNA(Leu) = N-terminal L-leucyl-L-lysyl-[protein] + tRNA(Leu) + H(+). It catalyses the reaction N-terminal L-arginyl-[protein] + L-leucyl-tRNA(Leu) = N-terminal L-leucyl-L-arginyl-[protein] + tRNA(Leu) + H(+). The catalysed reaction is L-phenylalanyl-tRNA(Phe) + an N-terminal L-alpha-aminoacyl-[protein] = an N-terminal L-phenylalanyl-L-alpha-aminoacyl-[protein] + tRNA(Phe). Its function is as follows. Functions in the N-end rule pathway of protein degradation where it conjugates Leu, Phe and, less efficiently, Met from aminoacyl-tRNAs to the N-termini of proteins containing an N-terminal arginine or lysine. In Teredinibacter turnerae (strain ATCC 39867 / T7901), this protein is Leucyl/phenylalanyl-tRNA--protein transferase.